The sequence spans 221 residues: Cytidylate kinase 1 (221 aa).

An ATP-binding site is contributed by 7 to 15 (GPSASGKSS).

This sequence belongs to the cytidylate kinase family. Type 1 subfamily.

It localises to the cytoplasm. It carries out the reaction CMP + ATP = CDP + ADP. It catalyses the reaction dCMP + ATP = dCDP + ADP. In Borreliella burgdorferi (strain ATCC 35210 / DSM 4680 / CIP 102532 / B31) (Borrelia burgdorferi), this protein is Cytidylate kinase 1.